We begin with the raw amino-acid sequence, 189 residues long: uncharacterized protein (189 aa).

The first 23 residues, 1 to 23, serve as a signal peptide directing secretion; sequence MIKTTPHKIVILMGILLSPSVFA. The tract at residues 104–125 is disordered; the sequence is SSPKLIIPQSGDSSSTTSNIGM. Over residues 113 to 123 the composition is skewed to polar residues; that stretch reads SGDSSSTTSNI.

The protein belongs to the fimbrial protein family.

The protein resides in the fimbrium. Its function is as follows. Part of the yadCKLM-htrE-yadVN fimbrial operon. Could contribute to adhesion to various surfaces in specific environmental niches. This is an uncharacterized protein from Escherichia coli (strain K12).